Here is a 90-residue protein sequence, read N- to C-terminus: Probable Fe(2+)-trafficking protein (90 aa).

It belongs to the Fe(2+)-trafficking protein family.

Could be a mediator in iron transactions between iron acquisition and iron-requiring processes, such as synthesis and/or repair of Fe-S clusters in biosynthetic enzymes. This Pseudomonas putida (strain ATCC 700007 / DSM 6899 / JCM 31910 / BCRC 17059 / LMG 24140 / F1) protein is Probable Fe(2+)-trafficking protein.